Consider the following 147-residue polypeptide: Hemoglobin subunit beta (147 aa).

The Globin domain maps to 3–147 (EWTDSERAII…VVSALGREYH (145 aa)). Heme b is bound by residues His64 and His93.

The protein belongs to the globin family. Heterotetramer of two alpha chains and two beta chains. In terms of tissue distribution, red blood cells.

Functionally, involved in oxygen transport from gills to the various peripheral tissues. The polypeptide is Hemoglobin subunit beta (hbb) (Gadus morhua (Atlantic cod)).